A 505-amino-acid chain; its full sequence is uncharacterized protein (505 aa).

A disordered region spans residues 1 to 52 (MVDGSIHVPVQSHEGQHDNSSSLNEEIQTSQDPLGIVESYQESSTSDFDKSH). Residues 18–32 (DNSSSLNEEIQTSQD) show a composition bias toward polar residues. Helical transmembrane passes span 141-161 (FWIVFFLGQVLSLCITATNTF), 173-193 (AFQTFLVYALLTLVYTPYTVF), 208-228 (GWKYIIFAFFDVEGNYFVVLA), 235-255 (LSASLLDSWATVAVVILSFIF), 265-285 (ILGVVACIGGLVLLVVSDVIS), 290-310 (SAVNPGLGDGYMIIGATCYGV), 326-346 (VVIGQLSLYGSIISIIQTFIF), 362-382 (GYLAGFILVMFLLYSLAPILF), 389-409 (FYNISLLTSDFWSLVIGIHVF), and 415-435 (WLYPIAFVLIILGLFVYHVFV). Phosphoserine is present on residues serine 463, serine 466, and serine 467.

Belongs to the SLC35F solute transporter family.

The protein resides in the golgi apparatus membrane. This is an uncharacterized protein from Schizosaccharomyces pombe (strain 972 / ATCC 24843) (Fission yeast).